Reading from the N-terminus, the 564-residue chain is Arginine--tRNA ligase (564 aa).

A 'HIGH' region motif is present at residues 124–134 (PNIAKDMHVGH).

This sequence belongs to the class-I aminoacyl-tRNA synthetase family. Monomer.

The protein resides in the cytoplasm. It catalyses the reaction tRNA(Arg) + L-arginine + ATP = L-arginyl-tRNA(Arg) + AMP + diphosphate. The protein is Arginine--tRNA ligase of Chlamydia caviae (strain ATCC VR-813 / DSM 19441 / 03DC25 / GPIC) (Chlamydophila caviae).